A 562-amino-acid polypeptide reads, in one-letter code: Aureusidin synthase (562 aa).

Intrachain disulfides connect C71/C86 and C85/C148. 6 residues coordinate Cu cation: H147, H168, H177, H301, H305, and H335. The 2'-(S-cysteinyl)-histidine (Cys-His) cross-link spans 151-168 (CAGAYNQAGFTNLKLQIH).

The protein belongs to the tyrosinase family. Monomer. Requires Cu(2+) as cofactor. In terms of processing, glycosylated. Contains probably N- and C-terminal propeptides. Expressed in petals. Not detected in stems and leaves.

It is found in the vacuole lumen. The catalysed reaction is 2',4,4',6'-tetrahydroxychalcone 4'-O-beta-D-glucoside + O2 = aureusidin 6-O-beta-glucoside + H2O. It carries out the reaction 2 2',3,4,4',6'-pentahydroxychalcone 4'-O-beta-D-glucoside + O2 + 2 H(+) = 2 aureusidin 6-O-beta-glucoside + 2 H2O. It catalyses the reaction 2',3,4,4',6'-pentahydroxychalcone 4'-O-beta-D-glucoside + O2 + H(+) = bracteatin 6-O-beta-glucoside + H2O. Its activity is regulated as follows. H(2)O(2) activates the 3-hydroxylation and oxidative cyclization of tetrahydroxychalcone but inhibits reaction with pentahydroxychalcone. Inhibited by phenylthiourea. Functionally, involved in the biosynthesis of aurones, plant flavonoids that provide yellow coloration to flowers. Can use tetrahydroxychalcone (THC), pentahydroxychalcone (PHC), THC 4'-glucoside and PHC 4'-glucoside as substrates, but not 2'-hydroxychalcone, 4-hydroxychalcone, PHC 3-glucoside, 2',6'-dihydroxy-4,4'-dimethoxychalcone, naringenin, eriodictyol and 4,4',6-trihydroxyaurone. Can also produce bracteatin from PHC. This is Aureusidin synthase (AS1) from Antirrhinum majus (Garden snapdragon).